The primary structure comprises 596 residues: Arginine--tRNA ligase (596 aa).

The short motif at 128–138 (ANPTSSLHVGH) is the 'HIGH' region element.

This sequence belongs to the class-I aminoacyl-tRNA synthetase family. Monomer.

The protein localises to the cytoplasm. It catalyses the reaction tRNA(Arg) + L-arginine + ATP = L-arginyl-tRNA(Arg) + AMP + diphosphate. The sequence is that of Arginine--tRNA ligase from Acinetobacter baumannii (strain SDF).